The sequence spans 78 residues: Sec-independent protein translocase protein TatA (78 aa).

The helical transmembrane segment at 1–21 threads the bilayer; sequence MGSLSIWHWIVVLAVVLLLFG. The interval 43 to 78 is disordered; sequence LAEDDEPAKTPAAPPEAPRPLPHQTSSAAEAEKKPV. Residues 54–63 show a composition bias toward pro residues; the sequence is AAPPEAPRPL.

Belongs to the TatA/E family. As to quaternary structure, the Tat system comprises two distinct complexes: a TatABC complex, containing multiple copies of TatA, TatB and TatC subunits, and a separate TatA complex, containing only TatA subunits. Substrates initially bind to the TatABC complex, which probably triggers association of the separate TatA complex to form the active translocon.

The protein resides in the cell inner membrane. Functionally, part of the twin-arginine translocation (Tat) system that transports large folded proteins containing a characteristic twin-arginine motif in their signal peptide across membranes. TatA could form the protein-conducting channel of the Tat system. The protein is Sec-independent protein translocase protein TatA of Xanthobacter autotrophicus (strain ATCC BAA-1158 / Py2).